A 126-amino-acid polypeptide reads, in one-letter code: Acidic phospholipase A2 4 (126 aa).

Residue S1 is a signal peptide. A propeptide spanning residues 2-7 (NRPMPL) is cleaved from the precursor. Disulfide bonds link C18/C78, C33/C125, C35/C51, C50/C106, C57/C99, C67/C92, and C85/C97. 3 residues coordinate Ca(2+): Y34, G36, and G38. Residue H54 is part of the active site. D55 is a Ca(2+) binding site. The active site involves D100.

It belongs to the phospholipase A2 family. Group I subfamily. D49 sub-subfamily. In terms of assembly, monomer. It depends on Ca(2+) as a cofactor. As to expression, expressed by the venom gland.

Its subcellular location is the secreted. It carries out the reaction a 1,2-diacyl-sn-glycero-3-phosphocholine + H2O = a 1-acyl-sn-glycero-3-phosphocholine + a fatty acid + H(+). Its function is as follows. Snake venom phospholipase A2 (PLA2) that exhibits strong anticoagulant activity, which is not due to the catalytic activity. PLA2 catalyzes the calcium-dependent hydrolysis of the 2-acyl groups in 3-sn-phosphoglycerides. The chain is Acidic phospholipase A2 4 from Naja sagittifera (Andaman cobra).